Reading from the N-terminus, the 211-residue chain is Putative hydrolase SMU_367 (211 aa).

An N-terminal signal peptide occupies residues 1-29 (MKKQFLEKAVFTVAATAATVVLGNKMADA). The LysM domain maps to 30–74 (DTYTLQEGDSFFSVAQRYHMDAYELASMNGKDITSLILPGQTLTV). Residues 77 to 101 (SAAPDNQAAAPTDTTQATTETNDAN) form a disordered region. Low complexity predominate over residues 78–101 (AAPDNQAAAPTDTTQATTETNDAN). The region spanning 85 to 209 (AAPTDTTQAT…GTPGSVSYIY (125 aa)) is the Peptidase C51 domain.

This Streptococcus mutans serotype c (strain ATCC 700610 / UA159) protein is Putative hydrolase SMU_367.